Reading from the N-terminus, the 233-residue chain is Endonuclease V (233 aa).

Asp48 and Asp116 together coordinate Mg(2+).

Belongs to the endonuclease V family. The cofactor is Mg(2+).

Its subcellular location is the cytoplasm. The catalysed reaction is Endonucleolytic cleavage at apurinic or apyrimidinic sites to products with a 5'-phosphate.. In terms of biological role, DNA repair enzyme involved in the repair of deaminated bases. Selectively cleaves double-stranded DNA at the second phosphodiester bond 3' to a deoxyinosine leaving behind the intact lesion on the nicked DNA. This is Endonuclease V from Streptomyces coelicolor (strain ATCC BAA-471 / A3(2) / M145).